The sequence spans 268 residues: Proteasome subunit beta type-4 (268 aa).

Belongs to the peptidase T1B family. As to quaternary structure, the 26S proteasome consists of a 20S proteasome core and two 19S regulatory subunits. The 20S proteasome core is composed of 28 subunits that are arranged in four stacked rings, resulting in a barrel-shaped structure. The two end rings are each formed by seven alpha subunits, and the two central rings are each formed by seven beta subunits. The catalytic chamber with the active sites is on the inside of the barrel.

The protein localises to the cytoplasm. It is found in the nucleus. Non-catalytic component of the proteasome, a multicatalytic proteinase complex which is characterized by its ability to cleave peptides with Arg, Phe, Tyr, Leu, and Glu adjacent to the leaving group at neutral or slightly basic pH. The proteasome has an ATP-dependent proteolytic activity. This chain is Proteasome subunit beta type-4 (Prosbeta7), found in Drosophila melanogaster (Fruit fly).